Here is a 529-residue protein sequence, read N- to C-terminus: Cytokinin dehydrogenase 4 (529 aa).

The signal sequence occupies residues 1–27 (MRGAMKPSIVHCLKLLMLLALGGVTMH). One can recognise an FAD-binding PCMH-type domain in the interval 63 to 244 (CSLLPAAVLH…TRARIALEPA (182 aa)). The FAD site is built by alanine 99, glycine 101, and glycine 103. At histidine 104 the chain carries Pros-8alpha-FAD histidine. Residues serine 105, glutamine 109, aspartate 168, threonine 173, serine 179, valine 183, and isoleucine 234 each contribute to the FAD site. N-linked (GlcNAc...) asparagine glycosylation is found at asparagine 285, asparagine 419, and asparagine 425. FAD-binding residues include tyrosine 479 and glutamine 517.

Belongs to the oxygen-dependent FAD-linked oxidoreductase family. As to quaternary structure, monomer. Requires FAD as cofactor. In terms of tissue distribution, expressed in inflorescence meristems.

It localises to the secreted. It is found in the extracellular space. The enzyme catalyses N(6)-dimethylallyladenine + A + H2O = 3-methyl-2-butenal + adenine + AH2. Catalyzes the oxidation of cytokinins, a family of N(6)-substituted adenine derivatives that are plant hormones, where the substituent is an isopentenyl group. This chain is Cytokinin dehydrogenase 4 (CKX4), found in Oryza sativa subsp. japonica (Rice).